A 372-amino-acid chain; its full sequence is DNA damage-repair/toleration protein DRT100 (372 aa).

The first 26 residues, 1–26, serve as a signal peptide directing secretion; sequence MRKLLASPFSSLLAVVFISVISVVRC. 9 LRR repeats span residues 136 to 158, 160 to 183, 184 to 205, 208 to 230, 232 to 254, 256 to 277, 280 to 302, 304 to 326, and 328 to 350; these read SLRI…IGKL, KLAV…TSLI, ELKH…DFGS, MLSR…ISGM, RLAD…MGNM, VLSL…SLLS, GLDV…FGSK, YLVS…LSSA, and FVGH…FPFD.

Its function is as follows. This protein is able to complement bacterial recA mutations, but its native function in the plant is not known. In Arabidopsis thaliana (Mouse-ear cress), this protein is DNA damage-repair/toleration protein DRT100 (DRT100).